A 432-amino-acid chain; its full sequence is Glutamate-1-semialdehyde 2,1-aminomutase 1 (432 aa).

K268 is modified (N6-(pyridoxal phosphate)lysine).

The protein belongs to the class-III pyridoxal-phosphate-dependent aminotransferase family. HemL subfamily. As to quaternary structure, homodimer. Requires pyridoxal 5'-phosphate as cofactor.

It is found in the cytoplasm. The catalysed reaction is (S)-4-amino-5-oxopentanoate = 5-aminolevulinate. Its pathway is porphyrin-containing compound metabolism; protoporphyrin-IX biosynthesis; 5-aminolevulinate from L-glutamyl-tRNA(Glu): step 2/2. The protein is Glutamate-1-semialdehyde 2,1-aminomutase 1 of Bacillus mycoides (strain KBAB4) (Bacillus weihenstephanensis).